A 263-amino-acid polypeptide reads, in one-letter code: Malonyl-[acyl-carrier protein] O-methyltransferase (263 aa).

This sequence belongs to the methyltransferase superfamily.

The enzyme catalyses malonyl-[ACP] + S-adenosyl-L-methionine = malonyl-[ACP] methyl ester + S-adenosyl-L-homocysteine. Its pathway is cofactor biosynthesis; biotin biosynthesis. In terms of biological role, converts the free carboxyl group of a malonyl-thioester to its methyl ester by transfer of a methyl group from S-adenosyl-L-methionine (SAM). It allows to synthesize pimeloyl-ACP via the fatty acid synthetic pathway. The sequence is that of Malonyl-[acyl-carrier protein] O-methyltransferase from Chlorobium luteolum (strain DSM 273 / BCRC 81028 / 2530) (Pelodictyon luteolum).